Reading from the N-terminus, the 744-residue chain is Scytalone dehydratase-like protein Arp1 (744 aa).

A substrate-binding site is contributed by Tyr621. Catalysis depends on residues His656 and His681. Asn702 lines the substrate pocket.

Belongs to the scytalone dehydratase family. As to quaternary structure, homotrimer. Each subunit contains an active site, located in the central part of the hydrophobic core of the monomer, which functions independently.

In terms of biological role, scytalone dehydratase-like protein; part of the Pks2 gene cluster that mediates the formation of infectious structures (appressoria), enabling these fungi to kill insects faster. The product of the Pks2 gene cluster is different from the one of Pks1 and has still not been identified. This chain is Scytalone dehydratase-like protein Arp1, found in Metarhizium brunneum (strain ARSEF 3297).